A 1023-amino-acid polypeptide reads, in one-letter code: Sodium/potassium-transporting ATPase subunit alpha-1 (1023 aa).

The propeptide occupies Met-1–Val-5. Residues Met-1–Glu-11 are compositionally biased toward basic and acidic residues. Residues Met-1 to Glu-38 are disordered. Over Gly-6–Pro-87 the chain is Cytoplasmic. The residue at position 9 (Lys-9) is an N6-acetyllysine. Phosphotyrosine is present on Tyr-10. Ser-16 bears the Phosphoserine; by PKC mark. N6-acetyllysine is present on Lys-21. Ser-23 is subject to Phosphoserine; by PKC. Positions Lys-28–Glu-38 are enriched in basic and acidic residues. Ser-40 and Ser-47 each carry phosphoserine. Positions Pro-82–Pro-84 are phosphoinositide-3 kinase binding. Residues Glu-88–Ala-108 traverse the membrane as a helical segment. Over Ile-109–Tyr-131 the chain is Extracellular. A helical transmembrane segment spans residues Leu-132 to Ala-152. The Cytoplasmic segment spans residues Lys-153 to Ile-288. The tract at residues Ser-216–Asn-235 is disordered. Phosphoserine is present on Ser-228. Tyr-260 is subject to Phosphotyrosine. Residues Glu-289–Ile-308 form a helical membrane-spanning segment. At Leu-309–Ala-320 the chain is on the extracellular side. A helical transmembrane segment spans residues Val-321–Ala-338. At Thr-339 to Leu-772 the chain is on the cytoplasmic side. The 4-aspartylphosphate intermediate role is filled by Asp-376. Phosphoserine is present on residues Ser-452 and Ser-484. Residue Lys-487 coordinates ATP. Tyr-542 carries the post-translational modification Phosphotyrosine. The segment at Arg-596–Asp-717 is mediates interaction with SCN7A. At Lys-661 the chain carries N6-succinyllysine. Ser-668 and Ser-675 each carry phosphoserine. The Mg(2+) site is built by Asp-717 and Asp-721. Residues Lys-773–Ile-792 form a helical membrane-spanning segment. The Extracellular portion of the chain corresponds to Phe-793–Leu-802. A helical membrane pass occupies residues Gly-803–Ala-823. The Cytoplasmic segment spans residues Tyr-824–Lys-843. A helical transmembrane segment spans residues Leu-844–Phe-866. At Phe-867–Cys-918 the chain is on the extracellular side. Residues His-919–Lys-938 form a helical membrane-spanning segment. The Cytoplasmic segment spans residues Thr-939–Asn-951. Ser-943 carries the phosphoserine; by PKA modification. A helical transmembrane segment spans residues Lys-952–Tyr-970. At Cys-971–Pro-985 the chain is on the extracellular side. A helical membrane pass occupies residues Thr-986–Lys-1006. Residues Leu-1007 to Tyr-1023 lie on the Cytoplasmic side of the membrane.

The protein belongs to the cation transport ATPase (P-type) (TC 3.A.3) family. Type IIC subfamily. In terms of assembly, the sodium/potassium-transporting ATPase is composed of a catalytic alpha subunit, an auxiliary non-catalytic beta subunit and an additional regulatory subunit. Interacts with regulatory subunit FXYD1. Interacts with regulatory subunit FXYD3. Interacts with SLC35G1 and STIM1. Interacts with SIK1. Interacts with CLN3; this interaction regulates the sodium/potassium-transporting ATPase complex localization at the plasma membrane. Interacts with SCN7A; activates ATP1A1 P-type sodium:potassium-exchanging transporter activity which indirectly signals to nearby neurons to regulate sodium homeostasis. In terms of processing, phosphorylation on Tyr-10 modulates pumping activity. Phosphorylation of Ser-943 by PKA modulates the response of ATP1A1 to PKC. Dephosphorylation by protein phosphatase 2A (PP2A) following increases in intracellular sodium, leading to increase catalytic activity. Expressed in the central nervous system, in most motor and sensory axons of the ventral and dorsal roots, as well as in the large motor neurons of the ventral horn (at protein level).

It is found in the cell membrane. The protein resides in the basolateral cell membrane. Its subcellular location is the sarcolemma. The protein localises to the cell projection. It localises to the axon. It is found in the melanosome. The catalysed reaction is K(+)(out) + Na(+)(in) + ATP + H2O = K(+)(in) + Na(+)(out) + ADP + phosphate + H(+). Functionally, this is the catalytic component of the active enzyme, which catalyzes the hydrolysis of ATP coupled with the exchange of sodium and potassium ions across the plasma membrane. This action creates the electrochemical gradient of sodium and potassium ions, providing the energy for active transport of various nutrients. Could also be part of an osmosensory signaling pathway that senses body-fluid sodium levels and controls salt intake behavior as well as voluntary water intake to regulate sodium homeostasis. The chain is Sodium/potassium-transporting ATPase subunit alpha-1 (Atp1a1) from Rattus norvegicus (Rat).